Reading from the N-terminus, the 396-residue chain is L-lactate dehydrogenase (396 aa).

Positions 1 to 380 (MIISAASDYR…TQDSLVQGLG (380 aa)) constitute an FMN hydroxy acid dehydrogenase domain. Tyr24 contributes to the substrate binding site. Positions 106 and 127 each coordinate FMN. Substrate is bound at residue Tyr129. Thr155 is a binding site for FMN. Arg164 lines the substrate pocket. Lys251 is an FMN binding site. His275 acts as the Proton acceptor in catalysis. Arg278 serves as a coordination point for substrate. FMN is bound at residue 306–330 (DSGIRNGLDVVRMIALGADTVLLGR).

Belongs to the FMN-dependent alpha-hydroxy acid dehydrogenase family. FMN serves as cofactor.

The protein resides in the cell inner membrane. The enzyme catalyses (S)-lactate + A = pyruvate + AH2. Its function is as follows. Catalyzes the conversion of L-lactate to pyruvate. Is coupled to the respiratory chain. The sequence is that of L-lactate dehydrogenase from Escherichia coli O127:H6 (strain E2348/69 / EPEC).